Consider the following 257-residue polypeptide: Adenosylcobinamide-GDP ribazoletransferase (257 aa).

6 consecutive transmembrane segments (helical) span residues 7–27 (QLTLFFIAMGFFTRIPMPTWV), 39–59 (RYFGLIGLLVGGICALVYEIT), 61–81 (GFLPVSVSIIFAMIAGLVVTG), 113–133 (IGTYGALALVMGLMLKFILLS), 143–163 (VVTALIVGHTLSRVMAASLIF), and 196–216 (VLVLWCSGLSGGLYIAIGLVL).

This sequence belongs to the CobS family. Mg(2+) is required as a cofactor.

It is found in the cell inner membrane. It carries out the reaction alpha-ribazole + adenosylcob(III)inamide-GDP = adenosylcob(III)alamin + GMP + H(+). It catalyses the reaction alpha-ribazole 5'-phosphate + adenosylcob(III)inamide-GDP = adenosylcob(III)alamin 5'-phosphate + GMP + H(+). It participates in cofactor biosynthesis; adenosylcobalamin biosynthesis; adenosylcobalamin from cob(II)yrinate a,c-diamide: step 7/7. Its function is as follows. Joins adenosylcobinamide-GDP and alpha-ribazole to generate adenosylcobalamin (Ado-cobalamin). Also synthesizes adenosylcobalamin 5'-phosphate from adenosylcobinamide-GDP and alpha-ribazole 5'-phosphate. The sequence is that of Adenosylcobinamide-GDP ribazoletransferase from Shewanella woodyi (strain ATCC 51908 / MS32).